Consider the following 888-residue polypeptide: Autotaxin (888 aa).

An N-terminal signal peptide occupies residues Met1 to Gly27. Residues Val28–Arg35 constitute a propeptide, removed by furin. Asn54 carries an N-linked (GlcNAc...) asparagine glycan. SMB domains are found at residues Ile55–Ala98 and Gly99–His143. Intrachain disulfides connect Cys59–Cys76, Cys63–Cys94, Cys74–Cys87, Cys80–Cys86, Cys103–Cys120, Cys108–Cys138, Cys118–Cys131, Cys124–Cys130, Cys149–Cys195, and Cys157–Cys351. The Cell attachment site signature appears at Arg127–Asp129. Residues Val145–Pro502 are phosphodiesterase. Zn(2+) contacts are provided by Asp172 and Thr210. Catalysis depends on Thr210, which acts as the Nucleophile. Residues Thr210, Asn231, and Asp312 each contribute to the 1-(9Z-octadecenoyl)-sn-glycero-3-phosphate site. Residues Thr210, Asn231, and Asp312 each contribute to the 1-hexadecanoyl-sn-glycero-3-phosphate site. 1-tetradecanoyl-sn-glycerol 3-phosphate contacts are provided by Thr210, Asn231, and Asp312. Zn(2+) contacts are provided by Asp312, His316, Asp359, and His360. 5 disulfides stabilise this stretch: Cys367/Cys469, Cys414/Cys831, Cys567/Cys692, Cys569/Cys677, and Cys800/Cys810. Asn411 is a glycosylation site (N-linked (GlcNAc...) asparagine). His475 contacts Zn(2+). His475 lines the 1-(9Z-octadecenoyl)-sn-glycero-3-phosphate pocket. His475 contributes to the 1-hexadecanoyl-sn-glycero-3-phosphate binding site. His475 is a 1-tetradecanoyl-sn-glycerol 3-phosphate binding site. Asn525 carries N-linked (GlcNAc...) asparagine glycosylation. The tract at residues Leu623 to Ile888 is nuclease-like domain. 5 residues coordinate Ca(2+): Asp765, Asp767, Asp769, Leu771, and Asp773. N-linked (GlcNAc...) asparagine glycosylation occurs at Asn832. Residues Ile855–Thr876 form a required for secretion region.

It belongs to the nucleotide pyrophosphatase/phosphodiesterase family. Requires Zn(2+) as cofactor. It depends on Ca(2+) as a cofactor. In terms of processing, N-glycosylation, but not furin-cleavage, plays a critical role on secretion and on lysoPLD activity. The interdomain disulfide bond between Cys-414 and Cys-831 is essential for catalytic activity. In terms of tissue distribution, detected in fetal serum (at protein level).

It localises to the secreted. The enzyme catalyses a 1-O-alkyl-sn-glycero-3-phosphoethanolamine + H2O = a 1-O-alkyl-sn-glycero-3-phosphate + ethanolamine + H(+). It carries out the reaction a 1-acyl-sn-glycero-3-phosphoethanolamine + H2O = a 1-acyl-sn-glycero-3-phosphate + ethanolamine + H(+). It catalyses the reaction 1-(9Z-octadecenoyl)-sn-glycero-3-phosphoethanolamine + H2O = 1-(9Z-octadecenoyl)-sn-glycero-3-phosphate + ethanolamine + H(+). The catalysed reaction is a 1-O-alkyl-sn-glycero-3-phosphocholine + H2O = a 1-O-alkyl-sn-glycero-3-phosphate + choline + H(+). The enzyme catalyses 1-O-(9Z-octadecenyl)-sn-glycero-3-phosphocholine + H2O = 1-O-(9Z-octadecenyl)-sn-glycero-3-phosphate + choline + H(+). It carries out the reaction 1-O-hexadecyl-sn-glycero-3-phosphocholine + H2O = 1-O-hexadecyl-sn-glycero-3-phosphate + choline + H(+). It catalyses the reaction a 1-O-(1Z-alkenyl)-sn-glycero-3-phosphocholine + H2O = a 1-O-(1Z-alkenyl)-sn-glycero-3-phosphate + choline + H(+). The catalysed reaction is a 1-acyl-sn-glycero-3-phosphocholine + H2O = a 1-acyl-sn-glycero-3-phosphate + choline + H(+). The enzyme catalyses 1-dodecanoyl-sn-glycero-3-phosphocholine + H2O = 1-dodecanoyl-sn-glycerol 3-phosphate + choline + H(+). It carries out the reaction 1-(9Z-octadecenoyl)-sn-glycero-3-phosphocholine + H2O = 1-(9Z-octadecenoyl)-sn-glycero-3-phosphate + choline + H(+). It catalyses the reaction 1-tetradecanoyl-sn-glycero-3-phosphocholine + H2O = 1-tetradecanoyl-sn-glycerol 3-phosphate + choline + H(+). The catalysed reaction is 1-decanoyl-sn-glycero-3-phosphocholine + H2O = 1-decanoyl-sn-glycero-3-phosphate + choline + H(+). The enzyme catalyses 1-octadecanoyl-sn-glycero-3-phosphocholine + H2O = 1-octadecanoyl-sn-glycero-3-phosphate + choline + H(+). It carries out the reaction 1-hexadecanoyl-sn-glycero-3-phosphocholine + H2O = 1-hexadecanoyl-sn-glycero-3-phosphate + choline + H(+). It catalyses the reaction 1-hexanoyl-sn-glycero-3-phosphocholine + H2O = 1-hexanoyl-sn-glycero-3-phosphate + choline + H(+). The catalysed reaction is 1-(9Z,12Z)-octadecadienoyl-sn-glycero-3-phosphocholine + H2O = 1-(9Z,12Z)-octadecadienoyl-sn-glycero-3-phosphate + choline + H(+). The enzyme catalyses sphing-4-enine-phosphocholine + H2O = sphing-4-enine 1-phosphate + choline + H(+). It carries out the reaction 1-(5Z,8Z,11Z,14Z-eicosatetraenoyl)-sn-glycero-3-phosphocholine + H2O = 1-(5Z,8Z,11Z,14Z-eicosatetraenoyl)-sn-glycero-3-phosphate + choline + H(+). It catalyses the reaction a 2-acyl-sn-glycero-3-phosphocholine + H2O = a 2-acyl-sn-glycerol 3-phosphate + choline + H(+). The catalysed reaction is a 1,2-diacyl-sn-glycero-3-phosphocholine + H2O = a 1,2-diacyl-sn-glycero-3-phosphate + choline + H(+). The enzyme catalyses 1,2-dioctanoyl-sn-glycero-3-phosphocholine + H2O = 1,2-dioctanoyl-sn-glycero-3-phosphate + choline + H(+). It carries out the reaction 1,2-didecanoyl-sn-glycero-3-phosphocholine + H2O = 1,2-didecanoyl-sn-glycero-3-phosphate + choline + H(+). It catalyses the reaction a 1-acyl-sn-glycero-3-phospho-L-serine + H2O = a 1-acyl-sn-glycero-3-phosphate + L-serine + H(+). The catalysed reaction is 1-(9Z-octadecenoyl)-sn-glycero-3-phospho-L-serine + H2O = 1-(9Z-octadecenoyl)-sn-glycero-3-phosphate + L-serine + H(+). The enzyme catalyses a 2-acyl-sn-glycero-3-phospho-L-serine + H2O = a 2-acyl-sn-glycerol 3-phosphate + L-serine + H(+). In terms of biological role, secreted lysophospholipase D that hydrolyzes lysophospholipids to produce the signaling molecule lysophosphatidic acid (LPA) in extracellular fluids. Its major substrate is lysophosphatidylcholine. Can also act on sphingosylphosphorylcholine producing sphingosine-1-phosphate, a modulator of cell motility. Can hydrolyze, in vitro, bis-pNPP, to some extent pNP-TMP, and barely ATP. Involved in several motility-related processes such as angiogenesis and neurite outgrowth. Acts as an angiogenic factor by stimulating migration of smooth muscle cells and microtubule formation. Stimulates migration of melanoma cells, probably via a pertussis toxin-sensitive G protein. May have a role in induction of parturition. Possible involvement in cell proliferation and adipose tissue development. Required for LPA production in activated platelets, cleaves the sn-1 lysophospholipids to generate sn-1 lysophosphatidic acids containing predominantly 18:2 and 20:4 fatty acids. Shows a preference for the sn-1 to the sn-2 isomer of 1-O-alkyl-sn-glycero-3-phosphocholine (lyso-PAF). The sequence is that of Autotaxin from Bos taurus (Bovine).